Reading from the N-terminus, the 243-residue chain is Probable phosphatase CLI_3563 (243 aa).

Zn(2+) contacts are provided by His8, His10, His16, His41, Glu74, His102, His132, Asp192, and His194.

The protein belongs to the PHP family. It depends on Zn(2+) as a cofactor.

The polypeptide is Probable phosphatase CLI_3563 (Clostridium botulinum (strain Langeland / NCTC 10281 / Type F)).